Consider the following 322-residue polypeptide: DNA primase small subunit PriS (322 aa).

Residues aspartate 86, aspartate 88, and aspartate 226 contribute to the active site.

This sequence belongs to the eukaryotic-type primase small subunit family. As to quaternary structure, heterodimer of a small subunit (PriS) and a large subunit (PriL). It depends on Mg(2+) as a cofactor. Mn(2+) is required as a cofactor.

Catalytic subunit of DNA primase, an RNA polymerase that catalyzes the synthesis of short RNA molecules used as primers for DNA polymerase during DNA replication. The small subunit contains the primase catalytic core and has DNA synthesis activity on its own. Binding to the large subunit stabilizes and modulates the activity, increasing the rate of DNA synthesis while decreasing the length of the DNA fragments, and conferring RNA synthesis capability. The DNA polymerase activity may enable DNA primase to also catalyze primer extension after primer synthesis. May also play a role in DNA repair. The chain is DNA primase small subunit PriS from Thermoplasma acidophilum (strain ATCC 25905 / DSM 1728 / JCM 9062 / NBRC 15155 / AMRC-C165).